Reading from the N-terminus, the 291-residue chain is Formamidopyrimidine-DNA glycosylase (291 aa).

The active-site Schiff-base intermediate with DNA is proline 2. Residue glutamate 3 is the Proton donor of the active site. The active-site Proton donor; for beta-elimination activity is the lysine 58. DNA is bound by residues histidine 104, arginine 123, and lysine 166. An FPG-type zinc finger spans residues 257 to 291 (KVYDREGEPCPTCGGTVQRFVQNGRSTFWCPKCQK). Arginine 281 acts as the Proton donor; for delta-elimination activity in catalysis.

The protein belongs to the FPG family. Monomer. Zn(2+) serves as cofactor.

It carries out the reaction Hydrolysis of DNA containing ring-opened 7-methylguanine residues, releasing 2,6-diamino-4-hydroxy-5-(N-methyl)formamidopyrimidine.. The enzyme catalyses 2'-deoxyribonucleotide-(2'-deoxyribose 5'-phosphate)-2'-deoxyribonucleotide-DNA = a 3'-end 2'-deoxyribonucleotide-(2,3-dehydro-2,3-deoxyribose 5'-phosphate)-DNA + a 5'-end 5'-phospho-2'-deoxyribonucleoside-DNA + H(+). In terms of biological role, involved in base excision repair of DNA damaged by oxidation or by mutagenic agents. Acts as a DNA glycosylase that recognizes and removes damaged bases. Has a preference for oxidized purines, such as 7,8-dihydro-8-oxoguanine (8-oxoG). Has AP (apurinic/apyrimidinic) lyase activity and introduces nicks in the DNA strand. Cleaves the DNA backbone by beta-delta elimination to generate a single-strand break at the site of the removed base with both 3'- and 5'-phosphates. The protein is Formamidopyrimidine-DNA glycosylase of Rhodopseudomonas palustris (strain ATCC BAA-98 / CGA009).